A 352-amino-acid polypeptide reads, in one-letter code: Pre-rRNA-processing protein ipi1 (352 aa).

The protein belongs to the IPI1/TEX10 family. As to quaternary structure, component of the RIX1 complex, composed of rrm-9/ipi1, rix1/ipi2 and ipi3 in a 1:2:2 stoichiometry. The complex interacts (via rix1) with mdn1 (via its hexameric AAA ATPase ring) and the pre-60S ribosome particles.

It localises to the nucleus. Component of the RIX1 complex required for processing of ITS2 sequences from 35S pre-rRNA. The chain is Pre-rRNA-processing protein ipi1 (rrm-9) from Neurospora crassa (strain ATCC 24698 / 74-OR23-1A / CBS 708.71 / DSM 1257 / FGSC 987).